Here is a 101-residue protein sequence, read N- to C-terminus: MAKVSAVNRNNHRAALVKRDKEKRTALKNIIKDRTLSVEDRFDATLKLAQMPRNGSATRVRLRCKLSGRPRANYRKFELSRIALRDLASAGQIPGMVKSSW.

This sequence belongs to the universal ribosomal protein uS14 family. As to quaternary structure, part of the 30S ribosomal subunit. Contacts proteins S3 and S10.

Its function is as follows. Binds 16S rRNA, required for the assembly of 30S particles and may also be responsible for determining the conformation of the 16S rRNA at the A site. The sequence is that of Small ribosomal subunit protein uS14 from Gluconobacter oxydans (strain 621H) (Gluconobacter suboxydans).